Reading from the N-terminus, the 348-residue chain is Ion-translocating oxidoreductase complex subunit D (348 aa).

5 helical membrane passes run 19–39 (FMLWVIVAMLPALIVQIAFFG), 41–61 (GVVIQLAIALSMAIVIEIVVA), 66–86 (KSTTFYLADLAGVVTATILAM), 87–107 (AIPPYAPYWVVMIGMIVALLL), and 122–142 (PAMVAYAFLLISFPVQMTSWL). Thr186 carries the FMN phosphoryl threonine modification. Transmembrane regions (helical) follow at residues 212–232 (IFARGWLQLNLAFLAGGLFLL), 236–256 (IIHWQIPVAMLVVFSVLSALT), 265–285 (LNVLSQLFSGAMMFGAFFIAT), 291–311 (SITPKGKLIFGGLIGLLAYLI), and 315–335 (GSYPDAIAFAVLLANLCVPLI).

It belongs to the NqrB/RnfD family. As to quaternary structure, the complex is composed of six subunits: RnfA, RnfB, RnfC, RnfD, RnfE and RnfG. FMN is required as a cofactor.

It is found in the cell inner membrane. Its function is as follows. Part of a membrane-bound complex that couples electron transfer with translocation of ions across the membrane. This Haemophilus ducreyi (strain 35000HP / ATCC 700724) protein is Ion-translocating oxidoreductase complex subunit D.